The sequence spans 357 residues: Metacaspase-3 (357 aa).

His168 is a catalytic residue. Residues Asp183, Asp199, and Asp200 each coordinate Ca(2+). Residue Cys223 is part of the active site. Asp230 is a binding site for Ca(2+).

This sequence belongs to the peptidase C14B family.

Its subcellular location is the recycling endosome. With respect to regulation, activated by Ca(2+). Functionally, cysteine protease that cleaves specifically after arginine or lysine residues. In the bloodstream form, may cleave inactive metacaspase-4 MCA4 prior to MCA4 secretion. In Trypanosoma brucei brucei, this protein is Metacaspase-3.